The following is a 407-amino-acid chain: Arginine biosynthesis bifunctional protein ArgJ (407 aa).

6 residues coordinate substrate: Thr157, Lys183, Thr194, Glu280, Asn402, and Thr407. The active-site Nucleophile is the Thr194.

Belongs to the ArgJ family. As to quaternary structure, heterotetramer of two alpha and two beta chains.

It is found in the cytoplasm. The catalysed reaction is N(2)-acetyl-L-ornithine + L-glutamate = N-acetyl-L-glutamate + L-ornithine. It carries out the reaction L-glutamate + acetyl-CoA = N-acetyl-L-glutamate + CoA + H(+). Its pathway is amino-acid biosynthesis; L-arginine biosynthesis; L-ornithine and N-acetyl-L-glutamate from L-glutamate and N(2)-acetyl-L-ornithine (cyclic): step 1/1. It participates in amino-acid biosynthesis; L-arginine biosynthesis; N(2)-acetyl-L-ornithine from L-glutamate: step 1/4. Functionally, catalyzes two activities which are involved in the cyclic version of arginine biosynthesis: the synthesis of N-acetylglutamate from glutamate and acetyl-CoA as the acetyl donor, and of ornithine by transacetylation between N(2)-acetylornithine and glutamate. This chain is Arginine biosynthesis bifunctional protein ArgJ, found in Oceanobacillus iheyensis (strain DSM 14371 / CIP 107618 / JCM 11309 / KCTC 3954 / HTE831).